The following is a 348-amino-acid chain: Rhodopsin (348 aa).

The residue at position 1 (Met1) is an N-acetylmethionine. Topologically, residues 1 to 36 (MNGTEGPNFYVPFSNKTGVVRSPFEYPQYYLAEPWQ) are extracellular. 2 N-linked (GlcNAc...) asparagine glycosylation sites follow: Asn2 and Asn15. A helical membrane pass occupies residues 37–61 (FSMLAAYMFLLIVLGFPINFLTLYV). The Cytoplasmic segment spans residues 62–73 (TVQHKKLRTPLN). The helical transmembrane segment at 74 to 96 (YILLNLAVADLFMVFGGFTTTLY) threads the bilayer. Residues 97–110 (TSLHGYFVFGPTGC) lie on the Extracellular side of the membrane. Cys110 and Cys187 are joined by a disulfide. A helical transmembrane segment spans residues 111-133 (NVEGFFATLGGEIALWSLVVLAI). The 'Ionic lock' involved in activated form stabilization signature appears at 134 to 136 (ERY). Over 134-152 (ERYVVVCKPMSNFRFGENH) the chain is Cytoplasmic. Residues 153–173 (AIMGVAFTWVMALACAAPPLA) form a helical membrane-spanning segment. Topologically, residues 174-202 (GWSRYIPEGMQCSCGIDYYTLKPEVNNES) are extracellular. Glu201 lines the Zn(2+) pocket. The chain crosses the membrane as a helical span at residues 203 to 224 (FVIYMFVVHFTIPMIVIFFCYG). Topologically, residues 225-252 (QLVFTVKEAAAQQQESATTQKAEKEVTR) are cytoplasmic. Residues 253 to 274 (MVIIMVIAFLICWVPYASVAFY) form a helical membrane-spanning segment. Over 275-286 (IFTHQGSNFGPI) the chain is Extracellular. Gln279 is a Zn(2+) binding site. A helical transmembrane segment spans residues 287-308 (FMTLPAFFAKSASIYNPVIYIM). At Lys296 the chain carries N6-(retinylidene)lysine. At 309 to 348 (MNKQFRNCMLTTICCGKNPFAEEEGATTVSKTETSQVAPA) the chain is on the cytoplasmic side. Residues Cys322 and Cys323 are each lipidated (S-palmitoyl cysteine). The interval 330 to 348 (EEEGATTVSKTETSQVAPA) is interaction with SAG. Residues Thr335 and Thr336 each carry the phosphothreonine modification. At Ser338 the chain carries Phosphoserine. Residues Thr340 and Thr342 each carry the phosphothreonine modification. Position 343 is a phosphoserine (Ser343).

The protein belongs to the G-protein coupled receptor 1 family. Opsin subfamily. In terms of assembly, homodimer. May form a complex composed of RHO, GRK1 and RCVRN in a Ca(2+)-dependent manner; RCVRN prevents the interaction between GRK1 and RHO. Interacts with GRK1. Interacts (phosphorylated form) with SAG. Interacts with GNAT1. Interacts with GNAT3. SAG and G-proteins compete for a common binding site. Interacts with PRCD; the interaction promotes PRCD stability. Forms a complex with ASAP1 and ARF4. Forms a complex with ASAP1, RAB11A, Rabin8/RAB3IP, ARF4 and RAB11FIP3; the complex regulates Golgi-to-cilia rhodopsin/RHO transport in photoreceptors. In terms of processing, phosphorylated on some or all of the serine and threonine residues present in the C-terminal region. Contains one covalently linked retinal chromophore. Upon light absorption, the covalently bound 11-cis-retinal is converted to all-trans-retinal. After hydrolysis of the Schiff base and release of the covalently bound all-trans-retinal, active rhodopsin is regenerated by binding of a fresh molecule of 11-cis-retinal.

The protein resides in the membrane. It is found in the cell projection. It localises to the cilium. The protein localises to the photoreceptor outer segment. Its function is as follows. Photoreceptor required for image-forming vision at low light intensity. Required for photoreceptor cell viability after birth. Light-induced isomerization of 11-cis to all-trans retinal triggers a conformational change that activates signaling via G-proteins. Subsequent receptor phosphorylation mediates displacement of the bound G-protein alpha subunit by the arrestin SAG and terminates signaling. The chain is Rhodopsin (RHO) from Trichechus manatus (Caribbean manatee).